We begin with the raw amino-acid sequence, 874 residues long: Alanine--tRNA ligase (874 aa).

Residues His-562, His-566, Cys-665, and His-669 each contribute to the Zn(2+) site.

This sequence belongs to the class-II aminoacyl-tRNA synthetase family. Zn(2+) serves as cofactor.

The protein localises to the cytoplasm. The enzyme catalyses tRNA(Ala) + L-alanine + ATP = L-alanyl-tRNA(Ala) + AMP + diphosphate. Catalyzes the attachment of alanine to tRNA(Ala) in a two-step reaction: alanine is first activated by ATP to form Ala-AMP and then transferred to the acceptor end of tRNA(Ala). Also edits incorrectly charged Ser-tRNA(Ala) and Gly-tRNA(Ala) via its editing domain. This is Alanine--tRNA ligase from Pseudomonas syringae pv. syringae (strain B728a).